We begin with the raw amino-acid sequence, 358 residues long: Histidinol-phosphate aminotransferase (358 aa).

K210 is modified (N6-(pyridoxal phosphate)lysine).

Belongs to the class-II pyridoxal-phosphate-dependent aminotransferase family. Histidinol-phosphate aminotransferase subfamily. Homodimer. The cofactor is pyridoxal 5'-phosphate.

The enzyme catalyses L-histidinol phosphate + 2-oxoglutarate = 3-(imidazol-4-yl)-2-oxopropyl phosphate + L-glutamate. It functions in the pathway amino-acid biosynthesis; L-histidine biosynthesis; L-histidine from 5-phospho-alpha-D-ribose 1-diphosphate: step 7/9. The sequence is that of Histidinol-phosphate aminotransferase from Clostridium beijerinckii (strain ATCC 51743 / NCIMB 8052) (Clostridium acetobutylicum).